We begin with the raw amino-acid sequence, 93 residues long: Small ribosomal subunit protein uS19 (93 aa).

It belongs to the universal ribosomal protein uS19 family.

Protein S19 forms a complex with S13 that binds strongly to the 16S ribosomal RNA. In Mycolicibacterium paratuberculosis (strain ATCC BAA-968 / K-10) (Mycobacterium paratuberculosis), this protein is Small ribosomal subunit protein uS19.